The following is a 179-amino-acid chain: MKQFLDFLPLVVFFAFYKLYDIYAATSALIVATAIVLIYSWVRYRKVEKMALITFVLVAVFGGLTIFFHNDEFIKWKVTVIYGLFAGALLISQWVMKKPLIQRMLGKELTLPQPVWSKLNLAWAVFFILCGLANIYIAFWLPQNIWVNFKVFGLTALTLIFTLLSGVYIYRHLPQEDKS.

5 helical membrane passes run 22 to 42, 50 to 70, 76 to 96, 121 to 141, and 149 to 169; these read IYAA…YSWV, MALI…FFHN, WKVT…QWVM, LAWA…AFWL, and FKVF…GVYI.

This sequence belongs to the YciB family.

It is found in the cell inner membrane. Its function is as follows. Plays a role in cell envelope biogenesis, maintenance of cell envelope integrity and membrane homeostasis. The sequence is that of Inner membrane-spanning protein YciB from Citrobacter koseri (strain ATCC BAA-895 / CDC 4225-83 / SGSC4696).